Reading from the N-terminus, the 218-residue chain is ATP phosphoribosyltransferase (218 aa).

It belongs to the ATP phosphoribosyltransferase family. Short subfamily. As to quaternary structure, heteromultimer composed of HisG and HisZ subunits.

It localises to the cytoplasm. The enzyme catalyses 1-(5-phospho-beta-D-ribosyl)-ATP + diphosphate = 5-phospho-alpha-D-ribose 1-diphosphate + ATP. The protein operates within amino-acid biosynthesis; L-histidine biosynthesis; L-histidine from 5-phospho-alpha-D-ribose 1-diphosphate: step 1/9. Functionally, catalyzes the condensation of ATP and 5-phosphoribose 1-diphosphate to form N'-(5'-phosphoribosyl)-ATP (PR-ATP). Has a crucial role in the pathway because the rate of histidine biosynthesis seems to be controlled primarily by regulation of HisG enzymatic activity. This Trichormus variabilis (strain ATCC 29413 / PCC 7937) (Anabaena variabilis) protein is ATP phosphoribosyltransferase.